A 360-amino-acid chain; its full sequence is Photosystem II protein D1 3 (360 aa).

The next 3 helical transmembrane spans lie at 29 to 46 (YVGWFGVLLIPTALTAAI), 118 to 133 (HFLIAIYAYMGRQWEL), and 142 to 156 (WIPVAFSAPVAAATA). Position 118 (histidine 118) interacts with chlorophyll a. Tyrosine 126 provides a ligand contact to pheophytin a. [CaMn4O5] cluster is bound by residues aspartate 170 and glutamate 189. Residues 197–218 (FHMIGVAGVFGGALFSAMHGSL) traverse the membrane as a helical segment. Position 198 (histidine 198) interacts with chlorophyll a. A quinone contacts are provided by residues histidine 215 and 264-265 (SF). Histidine 215 is a Fe cation binding site. Histidine 272 lines the Fe cation pocket. A helical transmembrane segment spans residues 274-288 (FLAAWPVIGIWFAAL). [CaMn4O5] cluster contacts are provided by histidine 332, glutamate 333, aspartate 342, and alanine 344. Residues 345 to 360 (SGEVQPIALTAPAIAS) constitute a propeptide that is removed on maturation.

This sequence belongs to the reaction center PufL/M/PsbA/D family. In terms of assembly, PSII is composed of 1 copy each of membrane proteins PsbA, PsbB, PsbC, PsbD, PsbE, PsbF, PsbH, PsbI, PsbJ, PsbK, PsbL, PsbM, PsbT, PsbX, PsbY, PsbZ, Psb30/Ycf12, peripheral proteins PsbO, CyanoQ (PsbQ), PsbU, PsbV and a large number of cofactors. It forms dimeric complexes. The D1/D2 heterodimer binds P680, chlorophylls that are the primary electron donor of PSII, and subsequent electron acceptors. It shares a non-heme iron and each subunit binds pheophytin, quinone, additional chlorophylls, carotenoids and lipids. D1 provides most of the ligands for the Mn4-Ca-O5 cluster of the oxygen-evolving complex (OEC). There is also a Cl(-1) ion associated with D1 and D2, which is required for oxygen evolution. The PSII complex binds additional chlorophylls, carotenoids and specific lipids. is required as a cofactor. Tyr-161 forms a radical intermediate that is referred to as redox-active TyrZ, YZ or Y-Z. In terms of processing, C-terminally processed by CtpA; processing is essential to allow assembly of the oxygen-evolving complex and thus photosynthetic growth.

It localises to the cellular thylakoid membrane. It carries out the reaction 2 a plastoquinone + 4 hnu + 2 H2O = 2 a plastoquinol + O2. In terms of biological role, photosystem II (PSII) is a light-driven water:plastoquinone oxidoreductase that uses light energy to abstract electrons from H(2)O, generating O(2) and a proton gradient subsequently used for ATP formation. It consists of a core antenna complex that captures photons, and an electron transfer chain that converts photonic excitation into a charge separation. The D1/D2 (PsbA/PsbD) reaction center heterodimer binds P680, the primary electron donor of PSII as well as several subsequent electron acceptors. The sequence is that of Photosystem II protein D1 3 from Nostoc sp. (strain PCC 7120 / SAG 25.82 / UTEX 2576).